Consider the following 63-residue polypeptide: Large ribosomal subunit protein uL29 (63 aa).

Belongs to the universal ribosomal protein uL29 family.

The protein is Large ribosomal subunit protein uL29 of Chromohalobacter salexigens (strain ATCC BAA-138 / DSM 3043 / CIP 106854 / NCIMB 13768 / 1H11).